The following is a 93-amino-acid chain: Putative ribosomal protein eL43-like (93 aa).

The C4-type zinc-finger motif lies at 40–61 (CSFCGKTKMKRRAVKIRHCNSC).

This sequence belongs to the eukaryotic ribosomal protein eL43 family.

The protein is Putative ribosomal protein eL43-like (RPL37AP8) of Homo sapiens (Human).